The following is a 389-amino-acid chain: Probable zinc transporter zip2 (389 aa).

The next 7 helical transmembrane spans lie at 6-26, 48-68, 88-108, 267-289, 305-325, 329-349, and 368-388; these read GWIL…GIYL, LVTG…ASVM, VFQF…NHFL, VLVA…LYLA, SCSL…GGIG, FLNF…LILS, and HSFI…IFDS.

The protein belongs to the ZIP transporter (TC 2.A.5) family.

It localises to the endoplasmic reticulum membrane. Functionally, probable zinc transporter that may mediate zinc remobilization from the endoplasmic reticulum under zinc limitation. The chain is Probable zinc transporter zip2 (zip2) from Schizosaccharomyces pombe (strain 972 / ATCC 24843) (Fission yeast).